A 130-amino-acid polypeptide reads, in one-letter code: Small ribosomal subunit protein uS9 (130 aa).

This sequence belongs to the universal ribosomal protein uS9 family.

This is Small ribosomal subunit protein uS9 from Stenotrophomonas maltophilia (strain R551-3).